Consider the following 344-residue polypeptide: Uroporphyrinogen decarboxylase (344 aa).

Substrate is bound by residues 26-30 (RQAGR), D76, Y151, S206, and H321.

The protein belongs to the uroporphyrinogen decarboxylase family. As to quaternary structure, homodimer.

Its subcellular location is the cytoplasm. The enzyme catalyses uroporphyrinogen III + 4 H(+) = coproporphyrinogen III + 4 CO2. It participates in porphyrin-containing compound metabolism; protoporphyrin-IX biosynthesis; coproporphyrinogen-III from 5-aminolevulinate: step 4/4. Catalyzes the decarboxylation of four acetate groups of uroporphyrinogen-III to yield coproporphyrinogen-III. This is Uroporphyrinogen decarboxylase from Sinorhizobium fredii (strain NBRC 101917 / NGR234).